A 346-amino-acid chain; its full sequence is Methylthioribose-1-phosphate isomerase 1 (346 aa).

Substrate contacts are provided by residues 48–50 (RGA), R91, and Q196. Residue D237 is the Proton donor of the active site. 247 to 248 (NK) serves as a coordination point for substrate.

The protein belongs to the eIF-2B alpha/beta/delta subunits family. MtnA subfamily.

It catalyses the reaction 5-(methylsulfanyl)-alpha-D-ribose 1-phosphate = 5-(methylsulfanyl)-D-ribulose 1-phosphate. It functions in the pathway amino-acid biosynthesis; L-methionine biosynthesis via salvage pathway; L-methionine from S-methyl-5-thio-alpha-D-ribose 1-phosphate: step 1/6. Functionally, catalyzes the interconversion of methylthioribose-1-phosphate (MTR-1-P) into methylthioribulose-1-phosphate (MTRu-1-P). The protein is Methylthioribose-1-phosphate isomerase 1 of Pseudothermotoga lettingae (strain ATCC BAA-301 / DSM 14385 / NBRC 107922 / TMO) (Thermotoga lettingae).